The primary structure comprises 141 residues: Protein X (141 aa).

Positions 25–48 (SSGPSFPRPAAGSAASSASSPSPS) are enriched in low complexity. The disordered stretch occupies residues 25–52 (SSGPSFPRPAAGSAASSASSPSPSDESD). Positions 68-113 (PCCLVFTCADLRTMDSTVNFVSWHANRQLGMPSKDLWTPYIKDQLL) are mitochondrial targeting sequence.

The protein belongs to the orthohepadnavirus protein X family. As to quaternary structure, may form homodimer. May interact with host CEBPA, CFLAR, CREB1, DDB1, E4F1, HBXIP, HSPD1/HSP60, NFKBIA, POLR2E and SMAD4. Interacts with host SMC5-SMC6 complex and induces its degradation. Interacts with host TRPC4AP; leading to prevent ubiquitination of TRPC4AP. Interacts with host PLSCR1; this interaction promotes ubiquitination and degradation of HBx and impairs HBx-mediated cell proliferation. In terms of processing, a fraction may be phosphorylated in insect cells and HepG2 cells, a human hepatoblastoma cell line. Phosphorylated in vitro by host protein kinase C or mitogen-activated protein kinase. N-acetylated in insect cells.

It is found in the host cytoplasm. The protein localises to the host nucleus. The protein resides in the host mitochondrion. Its function is as follows. Multifunctional protein that plays a role in silencing host antiviral defenses and promoting viral transcription. Does not seem to be essential for HBV infection. May be directly involved in development of cirrhosis and liver cancer (hepatocellular carcinoma). Most of cytosolic activities involve modulation of cytosolic calcium. The effect on apoptosis is controversial depending on the cell types in which the studies have been conducted. May induce apoptosis by localizing in mitochondria and causing loss of mitochondrial membrane potential. May also modulate apoptosis by binding host CFLAR, a key regulator of the death-inducing signaling complex (DISC). Promotes viral transcription by using the host E3 ubiquitin ligase DDB1 to target the SMC5-SMC6 complex to proteasomal degradation. This host complex would otherwise bind to viral episomal DNA, and prevents its transcription. Moderately stimulates transcription of many different viral and cellular transcription elements. Promoters and enhancers stimulated by HBx contain DNA binding sites for NF-kappa-B, AP-1, AP-2, c-EBP, ATF/CREB, or the calcium-activated factor NF-AT. The sequence is that of Protein X from Marmota monax (Woodchuck).